We begin with the raw amino-acid sequence, 79 residues long: CDC42 small effector protein 1-A (79 aa).

Residues C10 and C11 are each lipidated (S-palmitoyl cysteine). A CRIB domain is found at 30–43; sequence IGEPMNFVHLTHVG.

It belongs to the CDC42SE/SPEC family.

The protein resides in the cytoplasm. It localises to the cytoskeleton. The protein localises to the cell membrane. Its function is as follows. Probably involved in the organization of the actin cytoskeleton by acting downstream of CDC42, inducing actin filament assembly. This chain is CDC42 small effector protein 1-A (cdc42se1-a), found in Xenopus laevis (African clawed frog).